Here is a 609-residue protein sequence, read N- to C-terminus: Dihydroxy-acid dehydratase (609 aa).

Asp-81 is a Mg(2+) binding site. [2Fe-2S] cluster is bound at residue Cys-122. Mg(2+) contacts are provided by Asp-123 and Lys-124. Lys-124 carries the N6-carboxylysine modification. Position 195 (Cys-195) interacts with [2Fe-2S] cluster. Glu-491 contacts Mg(2+). The active-site Proton acceptor is the Ser-517.

It belongs to the IlvD/Edd family. In terms of assembly, homodimer. It depends on [2Fe-2S] cluster as a cofactor. Requires Mg(2+) as cofactor.

It catalyses the reaction (2R)-2,3-dihydroxy-3-methylbutanoate = 3-methyl-2-oxobutanoate + H2O. The enzyme catalyses (2R,3R)-2,3-dihydroxy-3-methylpentanoate = (S)-3-methyl-2-oxopentanoate + H2O. The protein operates within amino-acid biosynthesis; L-isoleucine biosynthesis; L-isoleucine from 2-oxobutanoate: step 3/4. It functions in the pathway amino-acid biosynthesis; L-valine biosynthesis; L-valine from pyruvate: step 3/4. Functions in the biosynthesis of branched-chain amino acids. Catalyzes the dehydration of (2R,3R)-2,3-dihydroxy-3-methylpentanoate (2,3-dihydroxy-3-methylvalerate) into 2-oxo-3-methylpentanoate (2-oxo-3-methylvalerate) and of (2R)-2,3-dihydroxy-3-methylbutanoate (2,3-dihydroxyisovalerate) into 2-oxo-3-methylbutanoate (2-oxoisovalerate), the penultimate precursor to L-isoleucine and L-valine, respectively. The protein is Dihydroxy-acid dehydratase of Acinetobacter baumannii (strain ACICU).